The chain runs to 661 residues: MTEARVSRGALAALLRALCALGCLLGRAAAAPSPIIKFPGDVAPKTDKELAVQYLNTFYGCPKESCNLFVLKDTLKKMQKFFGLPQTGELDQSTIETMRKPRCGNPDVANYNFFPRKPKWDKNQITYRIIGYTPDLDPQTVDDAFARAFQVWSDVTPLRFSRIHDGEADIMINFGRWEHGDGYPFDGKDGLLAHAFAPGPGVGGDSHFDDDELRTLGEGQVVRVKYGNADGEYCKFPFRFNGKEYTSCTDTGRSDGFLWCSTTYNFDKDGKYGFCPHEALFTMGGNADGQPCKFPFRFQGTSYDSCTTEGRTDGYRWCGTTEDYDRDKEYGFCPETAMSTVGGNSEGAPCVLPFTFLGNKHESCTSAGRSDGKLWCATTSNYDDDRKWGFCPDQGYSLFLVAAHEFGHAMGLEHSQDPGALMAPIYTYTKNFRLSHDDIQGIQELYGASPDIDTGTGPTPTLGPVTPELCKQDIVFDGISQIRGEIFFFKDRFIWRTVTPRDKPTGPLLVATFWPELPEKIDAVYEDPQEEKAVFFAGNEYWVYSASTLERGYPKPLTSLGLPPGVQKVDAAFNWSKNKKTYIFAGDKFWRYNEVKKKMDPGFPKLIADAWNAIPDNLDAVVDLQGGGHSYFFKGAYYLKLENQSLKSVKFGSIKSDWLGC.

The N-terminal stretch at Met-1–Ala-30 is a signal peptide. Residues Ala-31 to Asn-110 constitute a propeptide, activation peptide. The Cysteine switch motif lies at Pro-101–Val-108. Cys-103 is a binding site for Zn(2+). Positions Tyr-111 to Val-222 are collagenase-like 1. Ca(2+) is bound by residues Asp-135 and Asp-169. Zn(2+) is bound by residues His-179 and Asp-181. Ca(2+) contacts are provided by Asp-186 and Gly-187. Zn(2+) is bound at residue His-194. 3 residues coordinate Ca(2+): Gly-201, Gly-203, and Asp-205. His-207 lines the Zn(2+) pocket. Ca(2+) is bound by residues Asp-209, Asp-210, and Glu-212. Positions Arg-223–Ser-397 are collagen-binding. Fibronectin type-II domains follow at residues Ala-229–His-277, Ala-287–Glu-335, and Ser-345–Asp-393. Intrachain disulfides connect Cys-234/Cys-260, Cys-248/Cys-275, Cys-292/Cys-318, Cys-306/Cys-333, Cys-350/Cys-376, and Cys-364/Cys-391. The tract at residues Leu-398 to Thr-466 is collagenase-like 2. A Zn(2+)-binding site is contributed by His-404. The active site involves Glu-405. Positions 408 and 414 each coordinate Zn(2+). The tract at residues Ser-415 to Cys-661 is required for inhibitor TIMP2 binding. Hemopexin repeat units lie at residues Leu-469 to Leu-517, Pro-518 to Pro-564, Val-566 to Ile-614, and Pro-615 to Cys-661. A disulfide bond links Cys-470 and Cys-661. Positions 477, 522, and 570 each coordinate Ca(2+). A glycan (N-linked (GlcNAc...) asparagine) is linked at Asn-574. Asp-619 provides a ligand contact to Ca(2+). Asn-643 carries N-linked (GlcNAc...) asparagine glycosylation.

It belongs to the peptidase M10A family. As to quaternary structure, interacts (via the C-terminal hemopexin-like domains-containing region) with the integrin alpha-V/beta-3; the interaction promotes vascular invasion in angiogenic vessels and melamoma cells. Interacts (via the C-terminal PEX domain) with TIMP2 (via the C-terminal); the interaction inhibits the degradation activity. Interacts with GSK3B. It depends on Ca(2+) as a cofactor. The cofactor is Zn(2+). Post-translationally, phosphorylation on multiple sites modulates enzymatic activity. Phosphorylated by PKC in vitro. In terms of processing, the propeptide is processed by MMP14 (MT-MMP1) and MMP16 (MT-MMP3). Autocatalytic cleavage in the C-terminal produces the anti-angiogenic peptide, PEX. This processing appears to be facilitated by binding integrinv/beta3.

Its subcellular location is the secreted. The protein localises to the extracellular space. It is found in the extracellular matrix. The protein resides in the membrane. It localises to the nucleus. The catalysed reaction is Cleavage of gelatin type I and collagen types IV, V, VII, X. Cleaves the collagen-like sequence Pro-Gln-Gly-|-Ile-Ala-Gly-Gln.. In terms of biological role, ubiquitinous metalloproteinase that is involved in diverse functions such as remodeling of the vasculature, angiogenesis, tissue repair, tumor invasion, inflammation, and atherosclerotic plaque rupture. As well as degrading extracellular matrix proteins, can also act on several nonmatrix proteins such as big endothelial 1 and beta-type CGRP promoting vasoconstriction. Also cleaves KISS at a Gly-|-Leu bond. Appears to have a role in myocardial cell death pathways. Contributes to myocardial oxidative stress by regulating the activity of GSK3beta. Cleaves GSK3beta in vitro. Involved in the formation of the fibrovascular tissues. Its function is as follows. PEX, the C-terminal non-catalytic fragment of MMP2, possesses anti-angiogenic and anti-tumor properties and inhibits cell migration and cell adhesion to FGF2 and vitronectin. Ligand for integrin alpha-v/beta-3 on the surface of blood vessels. This Bos taurus (Bovine) protein is 72 kDa type IV collagenase (MMP2).